We begin with the raw amino-acid sequence, 257 residues long: Acetyl-coenzyme A carboxylase carboxyl transferase subunit beta 1 (257 aa).

The 257-residue stretch at 1–257 (MNINDIFLKR…KMHVNTGGEA (257 aa)) folds into the CoA carboxyltransferase N-terminal domain.

The protein belongs to the AccD/PCCB family. As to quaternary structure, acetyl-CoA carboxylase is a heterohexamer composed of biotin carboxyl carrier protein (AccB), biotin carboxylase (AccC) and two subunits each of ACCase subunit alpha (AccA) and ACCase subunit beta (AccD).

The protein resides in the cytoplasm. It catalyses the reaction N(6)-carboxybiotinyl-L-lysyl-[protein] + acetyl-CoA = N(6)-biotinyl-L-lysyl-[protein] + malonyl-CoA. Its pathway is lipid metabolism; malonyl-CoA biosynthesis; malonyl-CoA from acetyl-CoA: step 1/1. Its function is as follows. Component of the acetyl coenzyme A carboxylase (ACC) complex. Biotin carboxylase (BC) catalyzes the carboxylation of biotin on its carrier protein (BCCP) and then the CO(2) group is transferred by the transcarboxylase to acetyl-CoA to form malonyl-CoA. This is Acetyl-coenzyme A carboxylase carboxyl transferase subunit beta 1 from Lachnospira eligens (strain ATCC 27750 / DSM 3376 / VPI C15-48 / C15-B4) (Eubacterium eligens).